The chain runs to 282 residues: Bifunctional protein FolD (282 aa).

NADP(+) contacts are provided by residues glycine 165–serine 167 and isoleucine 231.

Belongs to the tetrahydrofolate dehydrogenase/cyclohydrolase family. As to quaternary structure, homodimer.

It carries out the reaction (6R)-5,10-methylene-5,6,7,8-tetrahydrofolate + NADP(+) = (6R)-5,10-methenyltetrahydrofolate + NADPH. The catalysed reaction is (6R)-5,10-methenyltetrahydrofolate + H2O = (6R)-10-formyltetrahydrofolate + H(+). It functions in the pathway one-carbon metabolism; tetrahydrofolate interconversion. Its function is as follows. Catalyzes the oxidation of 5,10-methylenetetrahydrofolate to 5,10-methenyltetrahydrofolate and then the hydrolysis of 5,10-methenyltetrahydrofolate to 10-formyltetrahydrofolate. The chain is Bifunctional protein FolD from Francisella philomiragia subsp. philomiragia (strain ATCC 25017 / CCUG 19701 / FSC 153 / O#319-036).